The chain runs to 359 residues: Phospho-N-acetylmuramoyl-pentapeptide-transferase (359 aa).

10 consecutive transmembrane segments (helical) span residues 27-47 (IYAL…MMRW), 73-93 (TMGG…WADL), 94-114 (TNIY…VGFV), 134-154 (LLGQ…QPAY), 166-186 (FTPD…IGAS), 197-217 (GLAI…IYIA), 233-253 (GVGE…GFLW), 261-281 (LFMG…IAVL), 286-306 (LLLI…IMQV), and 336-356 (KIVI…LSTL).

It belongs to the glycosyltransferase 4 family. MraY subfamily. It depends on Mg(2+) as a cofactor.

It localises to the cell inner membrane. It carries out the reaction UDP-N-acetyl-alpha-D-muramoyl-L-alanyl-gamma-D-glutamyl-meso-2,6-diaminopimeloyl-D-alanyl-D-alanine + di-trans,octa-cis-undecaprenyl phosphate = di-trans,octa-cis-undecaprenyl diphospho-N-acetyl-alpha-D-muramoyl-L-alanyl-D-glutamyl-meso-2,6-diaminopimeloyl-D-alanyl-D-alanine + UMP. It functions in the pathway cell wall biogenesis; peptidoglycan biosynthesis. In terms of biological role, catalyzes the initial step of the lipid cycle reactions in the biosynthesis of the cell wall peptidoglycan: transfers peptidoglycan precursor phospho-MurNAc-pentapeptide from UDP-MurNAc-pentapeptide onto the lipid carrier undecaprenyl phosphate, yielding undecaprenyl-pyrophosphoryl-MurNAc-pentapeptide, known as lipid I. The sequence is that of Phospho-N-acetylmuramoyl-pentapeptide-transferase from Maridesulfovibrio salexigens (strain ATCC 14822 / DSM 2638 / NCIMB 8403 / VKM B-1763) (Desulfovibrio salexigens).